Reading from the N-terminus, the 868-residue chain is Metabotropic glutamate receptor 6 (868 aa).

A signal peptide spans 1–20 (MARLLLALLAWLAQMSPVRA). The Extracellular segment spans residues 21-576 (AGSVRLAGGL…VVRLTWSSPW (556 aa)). Cysteine 48 and cysteine 90 are oxidised to a cystine. Residues serine 145, 166 to 168 (AST), and tyrosine 216 each bind L-glutamate. Cystine bridges form between cysteine 235-cysteine 527, cysteine 358-cysteine 374, cysteine 414-cysteine 421, cysteine 509-cysteine 528, cysteine 513-cysteine 531, cysteine 534-cysteine 546, and cysteine 549-cysteine 562. A glycan (N-linked (GlcNAc...) asparagine) is linked at asparagine 287. Aspartate 298 is a binding site for L-glutamate. Lysine 391 contacts L-glutamate. Asparagine 442 and asparagine 470 each carry an N-linked (GlcNAc...) asparagine glycan. Asparagine 558 is a glycosylation site (N-linked (GlcNAc...) asparagine). Residues 577-599 (AAPPLLLAVLGIMATTTVVGTFV) form a helical membrane-spanning segment. Over 600–613 (RHNNTPIVRASGRE) the chain is Cytoplasmic. A helical transmembrane segment spans residues 614-634 (LSYVLLTGIFLIYAVTFLMVA). The Extracellular segment spans residues 635 to 645 (EPGAAVCATRR). A helical membrane pass occupies residues 646–664 (LFLGLGTTLSYSALLTKTN). Residues 665-688 (RIYRIFEQGKRSVTPPPFISPTSQ) are Cytoplasmic-facing. The chain crosses the membrane as a helical span at residues 689–709 (LVITFSLTSLQVVGVIAWLGA). At 710 to 739 (QPPHSVIDYEEQRTVDPEQARGVLKCDMSD) the chain is on the extracellular side. Residues 740-761 (LSLIGCLGYSLLLMVTCTVYAI) form a helical membrane-spanning segment. Over 762–774 (KARGVPETFNEAK) the chain is Cytoplasmic. The chain crosses the membrane as a helical span at residues 775–797 (PIGFTMYTTCIVWLAFVPIFFGT). Residues 798 to 810 (AQSAEKIYIQTTT) lie on the Extracellular side of the membrane. The chain crosses the membrane as a helical span at residues 811–836 (LTVSLSLSASVSLGMLYVPKTYVILF). Residues 837–868 (HPEQNVQKRKRSLKTTSTVAAPPKGADTEDPK) are Cytoplasmic-facing. The segment at 845–868 (RKRSLKTTSTVAAPPKGADTEDPK) is disordered.

The protein belongs to the G-protein coupled receptor 3 family. In terms of assembly, homodimer. Interacts with GPR179. Interacts with photoreceptor synaptic protein LRIT1 (via its N-terminal extracellular domain).

The protein localises to the cell membrane. It is found in the endoplasmic reticulum membrane. It localises to the golgi apparatus membrane. The protein resides in the cell projection. Its subcellular location is the dendrite. In terms of biological role, G-protein coupled receptor for glutamate. Ligand binding causes a conformation change that triggers signaling via guanine nucleotide-binding proteins (G proteins) and modulates the activity of down-stream effectors, such as adenylate cyclase. Signaling inhibits adenylate cyclase activity. Signaling stimulates TRPM1 channel activity and Ca(2+) uptake. Required for normal vision. This is Metabotropic glutamate receptor 6 (GRM6) from Oryctolagus cuniculus (Rabbit).